The chain runs to 466 residues: Light-independent protochlorophyllide reductase subunit N (466 aa).

The [4Fe-4S] cluster site is built by C24, C49, and C109.

It belongs to the BchN/ChlN family. As to quaternary structure, protochlorophyllide reductase is composed of three subunits; ChlL, ChlN and ChlB. Forms a heterotetramer of two ChlB and two ChlN subunits. Requires [4Fe-4S] cluster as cofactor.

The enzyme catalyses chlorophyllide a + oxidized 2[4Fe-4S]-[ferredoxin] + 2 ADP + 2 phosphate = protochlorophyllide a + reduced 2[4Fe-4S]-[ferredoxin] + 2 ATP + 2 H2O. It functions in the pathway porphyrin-containing compound metabolism; chlorophyll biosynthesis (light-independent). In terms of biological role, component of the dark-operative protochlorophyllide reductase (DPOR) that uses Mg-ATP and reduced ferredoxin to reduce ring D of protochlorophyllide (Pchlide) to form chlorophyllide a (Chlide). This reaction is light-independent. The NB-protein (ChlN-ChlB) is the catalytic component of the complex. The polypeptide is Light-independent protochlorophyllide reductase subunit N (Synechococcus sp. (strain JA-3-3Ab) (Cyanobacteria bacterium Yellowstone A-Prime)).